The sequence spans 268 residues: Phosphatidylglycerol--prolipoprotein diacylglyceryl transferase (268 aa).

7 consecutive transmembrane segments (helical) span residues 27–47 (PALRWYGFTYLVGFVAAMWLL), 66–86 (LLFYGFLGVILGGRIGYVLFY), 104–124 (GGMSFHGGLMGVITAMIYIAW), 130–150 (FFAVADMVAPVVPIGLGAGRI), 181–201 (PSQLYQFALEGVALFLLLYWF), 208–228 (VGAVSGMFLLGYGIFRVIVET), and 242–262 (FMTMGQILSVPMVLFGLYLIL). Residue R149 coordinates a 1,2-diacyl-sn-glycero-3-phospho-(1'-sn-glycerol).

This sequence belongs to the Lgt family.

It is found in the cell inner membrane. It catalyses the reaction L-cysteinyl-[prolipoprotein] + a 1,2-diacyl-sn-glycero-3-phospho-(1'-sn-glycerol) = an S-1,2-diacyl-sn-glyceryl-L-cysteinyl-[prolipoprotein] + sn-glycerol 1-phosphate + H(+). The protein operates within protein modification; lipoprotein biosynthesis (diacylglyceryl transfer). Functionally, catalyzes the transfer of the diacylglyceryl group from phosphatidylglycerol to the sulfhydryl group of the N-terminal cysteine of a prolipoprotein, the first step in the formation of mature lipoproteins. The sequence is that of Phosphatidylglycerol--prolipoprotein diacylglyceryl transferase from Shewanella sp. (strain MR-4).